We begin with the raw amino-acid sequence, 394 residues long: S-adenosylmethionine synthase (394 aa).

An ATP-binding site is contributed by His-15. Asp-17 provides a ligand contact to Mg(2+). Glu-43 serves as a coordination point for K(+). Residues Glu-56 and Gln-99 each coordinate L-methionine. A flexible loop region spans residues 99–109 (QSPDIALGVNK). ATP-binding positions include 173–175 (DGK), 239–240 (RF), Asp-248, 254–255 (RK), Ala-271, and Lys-275. Asp-248 contacts L-methionine. Lys-279 contributes to the L-methionine binding site.

Belongs to the AdoMet synthase family. As to quaternary structure, homotetramer; dimer of dimers. The cofactor is Mg(2+). K(+) is required as a cofactor.

The protein localises to the cytoplasm. It carries out the reaction L-methionine + ATP + H2O = S-adenosyl-L-methionine + phosphate + diphosphate. The protein operates within amino-acid biosynthesis; S-adenosyl-L-methionine biosynthesis; S-adenosyl-L-methionine from L-methionine: step 1/1. Functionally, catalyzes the formation of S-adenosylmethionine (AdoMet) from methionine and ATP. The overall synthetic reaction is composed of two sequential steps, AdoMet formation and the subsequent tripolyphosphate hydrolysis which occurs prior to release of AdoMet from the enzyme. This chain is S-adenosylmethionine synthase, found in Kosmotoga olearia (strain ATCC BAA-1733 / DSM 21960 / TBF 19.5.1).